The primary structure comprises 424 residues: Elongation factor 1-alpha (424 aa).

In terms of domain architecture, tr-type G spans 5-223 (KPHLNLITIG…DAFKVPEKPI (219 aa)). Residues 14–21 (GHVDHGKS) are G1. GTP is bound at residue 14–21 (GHVDHGKS). Residue serine 21 coordinates Mg(2+). Residues 70 to 74 (GVTID) are G2. The interval 91 to 94 (DAPG) is G3. GTP-binding positions include 91–95 (DAPGH) and 148–151 (NKMD). The tract at residues 148–151 (NKMD) is G4. A G5 region spans residues 187–189 (SGY).

Belongs to the TRAFAC class translation factor GTPase superfamily. Classic translation factor GTPase family. EF-Tu/EF-1A subfamily.

It is found in the cytoplasm. The catalysed reaction is GTP + H2O = GDP + phosphate + H(+). Functionally, GTP hydrolase that promotes the GTP-dependent binding of aminoacyl-tRNA to the A-site of ribosomes during protein biosynthesis. The polypeptide is Elongation factor 1-alpha (Thermoplasma acidophilum (strain ATCC 25905 / DSM 1728 / JCM 9062 / NBRC 15155 / AMRC-C165)).